Here is a 105-residue protein sequence, read N- to C-terminus: Larval cuticle protein 65Ag1 (105 aa).

Positions 1 to 18 (MKFLIVFVALFAVALAAP) are cleaved as a signal peptide. In terms of domain architecture, Chitin-binding type R&amp;R spans 34-103 (PESFKYDWET…PQGAHLPVAP (70 aa)).

Functionally, component of the cuticle of the larva. The polypeptide is Larval cuticle protein 65Ag1 (Drosophila melanogaster (Fruit fly)).